The sequence spans 219 residues: Zinc finger C2HC domain-containing protein 1B (219 aa).

2 C2HC/C3H-type zinc fingers span residues 14–43 (ELFPCEVCGRRFAADVLERHGPICRKLFNK) and 117–146 (DYIQCPYCKRRFNETAASRHINFCKDQESR). 8 residues coordinate Zn(2+): Cys18, Cys21, His33, Cys37, Cys121, Cys124, His136, and Cys140. Residues 190 to 219 (EASAAPTRPAVDPASGAKLRQGFAKSSKKD) are disordered.

This sequence belongs to the ZC2HC1 family. Zn(2+) serves as cofactor.

This Bos taurus (Bovine) protein is Zinc finger C2HC domain-containing protein 1B (ZC2HC1B).